Consider the following 534-residue polypeptide: Chaperonin GroEL, chloroplastic (534 aa).

Residues 29 to 32 (TLGP), 86 to 90 (DGTTT), Gly-414, and Asp-496 each bind ATP.

It belongs to the chaperonin (HSP60) family. Forms a cylinder of 14 subunits composed of two heptameric rings stacked back-to-back. Interacts with the co-chaperonin GroES.

The protein localises to the plastid. The protein resides in the chloroplast. It carries out the reaction ATP + H2O + a folded polypeptide = ADP + phosphate + an unfolded polypeptide.. Its function is as follows. Together with its co-chaperonin GroES, plays an essential role in assisting protein folding. The GroEL-GroES system forms a nano-cage that allows encapsulation of the non-native substrate proteins and provides a physical environment optimized to promote and accelerate protein folding. This is Chaperonin GroEL, chloroplastic from Galdieria sulphuraria (Red alga).